Consider the following 355-residue polypeptide: Histidinol-phosphate aminotransferase (355 aa).

K222 carries the N6-(pyridoxal phosphate)lysine modification.

The protein belongs to the class-II pyridoxal-phosphate-dependent aminotransferase family. Histidinol-phosphate aminotransferase subfamily. Requires pyridoxal 5'-phosphate as cofactor.

The enzyme catalyses L-histidinol phosphate + 2-oxoglutarate = 3-(imidazol-4-yl)-2-oxopropyl phosphate + L-glutamate. The protein operates within amino-acid biosynthesis; L-histidine biosynthesis; L-histidine from 5-phospho-alpha-D-ribose 1-diphosphate: step 7/9. The protein is Histidinol-phosphate aminotransferase of Natronomonas pharaonis (strain ATCC 35678 / DSM 2160 / CIP 103997 / JCM 8858 / NBRC 14720 / NCIMB 2260 / Gabara) (Halobacterium pharaonis).